The following is a 481-amino-acid chain: Glutamyl-tRNA(Gln) amidotransferase subunit A (481 aa).

Catalysis depends on charge relay system residues Lys-76 and Ser-151. Ser-175 (acyl-ester intermediate) is an active-site residue.

The protein belongs to the amidase family. GatA subfamily. Heterotrimer of A, B and C subunits.

It catalyses the reaction L-glutamyl-tRNA(Gln) + L-glutamine + ATP + H2O = L-glutaminyl-tRNA(Gln) + L-glutamate + ADP + phosphate + H(+). Functionally, allows the formation of correctly charged Gln-tRNA(Gln) through the transamidation of misacylated Glu-tRNA(Gln) in organisms which lack glutaminyl-tRNA synthetase. The reaction takes place in the presence of glutamine and ATP through an activated gamma-phospho-Glu-tRNA(Gln). In Neisseria meningitidis serogroup C / serotype 2a (strain ATCC 700532 / DSM 15464 / FAM18), this protein is Glutamyl-tRNA(Gln) amidotransferase subunit A.